A 331-amino-acid polypeptide reads, in one-letter code: Glyceraldehyde-3-phosphate dehydrogenase (331 aa).

NAD(+) is bound by residues 12-13, Asp34, Arg78, and Thr120; that span reads RI. D-glyceraldehyde 3-phosphate-binding positions include 149–151, Thr180, 209–210, and Arg232; these read SCT and TG. Catalysis depends on Cys150, which acts as the Nucleophile. Asn314 serves as a coordination point for NAD(+).

It belongs to the glyceraldehyde-3-phosphate dehydrogenase family. As to quaternary structure, homotetramer.

Its subcellular location is the cytoplasm. The catalysed reaction is D-glyceraldehyde 3-phosphate + phosphate + NAD(+) = (2R)-3-phospho-glyceroyl phosphate + NADH + H(+). Its pathway is carbohydrate degradation; glycolysis; pyruvate from D-glyceraldehyde 3-phosphate: step 1/5. In terms of biological role, catalyzes the oxidative phosphorylation of glyceraldehyde 3-phosphate (G3P) to 1,3-bisphosphoglycerate (BPG) using the cofactor NAD. The first reaction step involves the formation of a hemiacetal intermediate between G3P and a cysteine residue, and this hemiacetal intermediate is then oxidized to a thioester, with concomitant reduction of NAD to NADH. The reduced NADH is then exchanged with the second NAD, and the thioester is attacked by a nucleophilic inorganic phosphate to produce BPG. This is Glyceraldehyde-3-phosphate dehydrogenase (gapA) from Shimwellia blattae (strain ATCC 29907 / DSM 4481 / JCM 1650 / NBRC 105725 / CDC 9005-74) (Escherichia blattae).